A 306-amino-acid chain; its full sequence is Glutaminase (306 aa).

Substrate contacts are provided by Ser-66, Asn-116, Glu-159, Asn-166, Tyr-190, Tyr-242, and Val-260.

This sequence belongs to the glutaminase family. As to quaternary structure, homotetramer.

The catalysed reaction is L-glutamine + H2O = L-glutamate + NH4(+). The protein is Glutaminase of Caulobacter vibrioides (strain ATCC 19089 / CIP 103742 / CB 15) (Caulobacter crescentus).